Here is a 266-residue protein sequence, read N- to C-terminus: Stomatin homolog PH1511 (266 aa).

A helical transmembrane segment spans residues 7-27 (FFVTSIILLFILIFLASAIKI). 2 coiled-coil regions span residues 125 to 152 (GQAH…EATD) and 178 to 213 (RQAE…ISEH).

This sequence belongs to the band 7/mec-2 family. As to quaternary structure, homotrimer. Interacts with PH1510 and is cleaved by PH1510.

Its subcellular location is the membrane. The chain is Stomatin homolog PH1511 from Pyrococcus horikoshii (strain ATCC 700860 / DSM 12428 / JCM 9974 / NBRC 100139 / OT-3).